A 630-amino-acid chain; its full sequence is Heat shock cognate 70 kDa protein 3 (630 aa).

Residues 611–630 (FYQGNNNPKPTTTTFNQDLD) form a disordered region. Residues 615-630 (NNNPKPTTTTFNQDLD) show a composition bias toward low complexity.

Belongs to the heat shock protein 70 family.

Functionally, may function in protein folding and assembly, and disassembly of protein complexes. The protein is Heat shock cognate 70 kDa protein 3 of Dictyostelium discoideum (Social amoeba).